We begin with the raw amino-acid sequence, 177 residues long: B-phycoerythrin beta chain (177 aa).

Positions 50 and 61 each coordinate phycourobilin. Position 72 is an N4-methylasparagine (Asn72). (2R,3E)-phycoerythrobilin contacts are provided by Cys82 and Cys158.

Belongs to the phycobiliprotein family. In terms of assembly, heteromer of 6 alpha, 6 beta and one gamma chain. Post-translationally, contains two covalently linked phycoerythrobilin chromophores and one covalently linked phycourobilin chromophore.

It localises to the plastid. The protein localises to the chloroplast thylakoid membrane. Its function is as follows. Light-harvesting photosynthetic bile pigment-protein from the phycobiliprotein complex. The chain is B-phycoerythrin beta chain (cpeB) from Porphyridium purpureum (Red alga).